Reading from the N-terminus, the 238-residue chain is Mitochondrial inner membrane protease atp23 (238 aa).

His-137 is a binding site for a divalent metal cation. Residue Glu-138 is part of the active site. His-141 serves as a coordination point for a divalent metal cation.

The protein belongs to the peptidase M76 family.

The protein resides in the mitochondrion inner membrane. Has a dual role in the assembly of mitochondrial ATPase. Acts as a protease that removes N-terminal residues of mitochondrial ATPase CF(0) subunit 6 at the intermembrane space side. Also involved in the correct assembly of the membrane-embedded ATPase CF(0) particle, probably mediating association of subunit 6 with the subunit 9 ring. This Aspergillus oryzae (strain ATCC 42149 / RIB 40) (Yellow koji mold) protein is Mitochondrial inner membrane protease atp23 (atp23).